The following is a 151-amino-acid chain: Ubiquitin-conjugating enzyme E2 2 (151 aa).

Residues 1–26 are disordered; that stretch reads MSTTARRRLMRDFKRMQQDPPQGVSA. The 147-residue stretch at 4–150 folds into the UBC core domain; it reads TARRRLMRDF…VRDTVEASWT (147 aa). The active-site Glycyl thioester intermediate is cysteine 88.

Belongs to the ubiquitin-conjugating enzyme family.

Its subcellular location is the cytoplasm. The protein resides in the nucleus. The enzyme catalyses S-ubiquitinyl-[E1 ubiquitin-activating enzyme]-L-cysteine + [E2 ubiquitin-conjugating enzyme]-L-cysteine = [E1 ubiquitin-activating enzyme]-L-cysteine + S-ubiquitinyl-[E2 ubiquitin-conjugating enzyme]-L-cysteine.. It participates in protein modification; protein ubiquitination. Functionally, catalyzes the covalent attachment of ubiquitin to other proteins. Plays a role in transcription regulation by catalyzing the monoubiquitination of histone H2B to form H2BK123ub1. H2BK123ub1 gives a specific tag for epigenetic transcriptional activation and is also a prerequisite for H3K4me and H3K79me formation. Also involved in postreplication repair of UV-damaged DNA, in N-end rule-dependent protein degradation and in sporulation. This is Ubiquitin-conjugating enzyme E2 2 (UBC2) from Yarrowia lipolytica (strain CLIB 122 / E 150) (Yeast).